The chain runs to 574 residues: MATRAPLAPPPNETEASVSRITREGKKLTYKLNVMQQPERARACGAGAKSSADRRPVDPPPVVELRVYESDPNDDLNKTDITFAYNANFFLYATLETARPMAQGRFAPNPTCPVLTGVPVAGVAYLDRPSQAGYFIFPDLSVRHEGVYRLNFHLYEETKESKDANENAPIQSMSNPMPSKPMAPKSFLEFRLEVVSVPFTVFSAKKFPGLATSTSLSRVIAEQGCRVRIRRDVRMRRRGEKRTDDYDYDEERVYRSSDRISTPDTHGYAGTPVERPRSTSTSTVDPSFPYGVDAQRRSSGATEYGFQGAQPYQRPLPPAPGPAPAAVSTPAPPAPPAPPSHNPGYQSHLSFGSTQTQYPAPQLPPTPQTASTLAAPYSPHPSYSHARNPSTSAEYETPGYSYPPSRMSTERSSYPKNGLPPLRLEPPKPLNMPSGEPRSSDPNAYHSVAQSAAPRSQTPSSSLVPSLPPLKALSGDYPNNLSQSSSSTSQSPSHDLGAGKKFFWDTGASLSKRSYEDSFGHDDRPLYNGMRPDTESYPRRLSDASRNFYNETRDEMAYKRANGRMATKISPALQ.

Disordered stretches follow at residues 1-22 (MATR…SRIT), 39-60 (ERAR…VDPP), 255-500 (RSSD…GAGK), and 513-540 (RSYE…YPRR). The 206-residue stretch at 25-230 (GKKLTYKLNV…AEQGCRVRIR (206 aa)) folds into the Velvet domain. The Nuclear localization signal signature appears at 39–44 (ERARAC). 2 stretches are compositionally biased toward pro residues: residues 314–323 (RPLPPAPGPA) and 330–341 (PAPPAPPAPPSH). Polar residues-rich tracts occupy residues 343–353 (PGYQSHLSFGS), 385–394 (HARNPSTSAE), 406–415 (RMSTERSSYP), and 448–458 (VAQSAAPRSQT). Positions 457–498 (QTPSSSLVPSLPPLKALSGDYPNNLSQSSSSTSQSPSHDLGA) are PEST. 2 stretches are compositionally biased toward low complexity: residues 459-474 (PSSS…KALS) and 482-493 (SQSSSSTSQSPS). Basic and acidic residues predominate over residues 513–525 (RSYEDSFGHDDRP).

The protein belongs to the velvet family. VeA subfamily. Component of the heterotrimeric velvet complex composed of laeA, veA and velB; VeA acting as a bridging protein between laeA and velB.

Its subcellular location is the nucleus. It localises to the cytoplasm. Component of the velvet transcription factor complex that controls sexual/asexual developmental ratio in response to light, promoting sexual development in the darkness while stimulating asexual sporulation under illumination. The velvet complex hat acts as a global regulator for secondary metabolite gene expression. Controls the expression of the cyclopiazonic acid, aflatrem, and aflatoxin gene clusters. Controls the expression of the sclerotium-specific pigment asparasone A gene cluster. Controls the expression of the aflavarin gene cluster. also controls the production of hydrolases and other extracellular proteins during growth on natural starch-based substrates. Regulates genes involved in the High Osmolarity Glycerol (HOG) signaling pathway. Required for the conidial and sclerotial density-dependent production. This is Developmental and secondary metabolism regulator veA from Aspergillus flavus (strain ATCC 200026 / FGSC A1120 / IAM 13836 / NRRL 3357 / JCM 12722 / SRRC 167).